The sequence spans 257 residues: Acetyl-coenzyme A carboxylase carboxyl transferase subunit beta (257 aa).

The CoA carboxyltransferase N-terminal domain occupies 5-257 (VFTKCERCKQ…DLERLLGFVG (253 aa)). C9, C12, C28, and C31 together coordinate Zn(2+). The C4-type zinc finger occupies 9–31 (CERCKQPVYEKDLRARFNVCPNC).

The protein belongs to the AccD/PCCB family. Acetyl-CoA carboxylase is a heterohexamer composed of biotin carboxyl carrier protein (AccB), biotin carboxylase (AccC) and two subunits each of ACCase subunit alpha (AccA) and ACCase subunit beta (AccD). Zn(2+) serves as cofactor.

Its subcellular location is the cytoplasm. The enzyme catalyses N(6)-carboxybiotinyl-L-lysyl-[protein] + acetyl-CoA = N(6)-biotinyl-L-lysyl-[protein] + malonyl-CoA. The protein operates within lipid metabolism; malonyl-CoA biosynthesis; malonyl-CoA from acetyl-CoA: step 1/1. Component of the acetyl coenzyme A carboxylase (ACC) complex. Biotin carboxylase (BC) catalyzes the carboxylation of biotin on its carrier protein (BCCP) and then the CO(2) group is transferred by the transcarboxylase to acetyl-CoA to form malonyl-CoA. The sequence is that of Acetyl-coenzyme A carboxylase carboxyl transferase subunit beta from Rubrobacter xylanophilus (strain DSM 9941 / JCM 11954 / NBRC 16129 / PRD-1).